The following is a 315-amino-acid chain: Homoserine O-succinyltransferase (315 aa).

Residue cysteine 142 is the Acyl-thioester intermediate of the active site. The substrate site is built by lysine 163 and serine 192. Histidine 235 (proton acceptor) is an active-site residue. Glutamate 237 is an active-site residue. Residue arginine 249 coordinates substrate.

It belongs to the MetA family.

It is found in the cytoplasm. The catalysed reaction is L-homoserine + succinyl-CoA = O-succinyl-L-homoserine + CoA. It functions in the pathway amino-acid biosynthesis; L-methionine biosynthesis via de novo pathway; O-succinyl-L-homoserine from L-homoserine: step 1/1. In terms of biological role, transfers a succinyl group from succinyl-CoA to L-homoserine, forming succinyl-L-homoserine. This chain is Homoserine O-succinyltransferase, found in Tolumonas auensis (strain DSM 9187 / NBRC 110442 / TA 4).